Here is a 122-residue protein sequence, read N- to C-terminus: Large ribosomal subunit protein uL14 (122 aa).

Belongs to the universal ribosomal protein uL14 family. As to quaternary structure, part of the 50S ribosomal subunit. Forms a cluster with proteins L3 and L19. In the 70S ribosome, L14 and L19 interact and together make contacts with the 16S rRNA in bridges B5 and B8.

Functionally, binds to 23S rRNA. Forms part of two intersubunit bridges in the 70S ribosome. The sequence is that of Large ribosomal subunit protein uL14 from Thermosipho melanesiensis (strain DSM 12029 / CIP 104789 / BI429).